The following is a 175-amino-acid chain: Regenerating islet-derived protein 3-beta (175 aa).

The first 26 residues, 1–26 (MLHRLAFPVMSWMLLSCLMLLSQVQG), serve as a signal peptide directing secretion. Residues 27 to 37 (EDSPKKIPSAR) constitute a propeptide that is removed on maturation. Disulfide bonds link cysteine 40/cysteine 51, cysteine 68/cysteine 171, and cysteine 146/cysteine 163. One can recognise a C-type lectin domain in the interval 47–172 (YGSYCYALFQ…CEVKLPYVCK (126 aa)). Histidine 107 serves as a coordination point for Zn(2+). The EPN signature appears at 114-116 (EPN). Residue glutamate 121 participates in Zn(2+) binding.

Forms a hexameric membrane-permeabilizing oligomeric pore on membrane phospholipids. The hexamer is formed by three dimers related by helical symmetry. Forms filaments, filamentation traps pore complexes and limits damage to host cells. Interacts with EXTL3. Post-translationally, proteolytic processing by trypsin removes an inhibitory N-terminal propeptide and is essential for peptidoglycan binding and antibacterial activity. In terms of tissue distribution, constitutively expressed in intestine.

The protein localises to the secreted. With respect to regulation, lipopolysaccharide inhibits pore-forming activity, explaining why is bactericidal for Gram-positive but not Gram-negative bacteria. Bactericidal C-type lectin which acts against several intestinal Gram-positive bacteria and Gram-negative bacteria. Lacks antibacterial activity against S.typhimurium. May play a role in protection against infection with S.enteritidis by inhibiting its translocation from the gut lumen into intestinal tissues and further extraintestinal tissues. In terms of biological role, acts as a hormone in response to different stimuli. Secreted by different cell types to activate its receptor EXTL3 and induce cell specific signaling pathways. In pancreas, is able stimulate cell proliferation. This Rattus norvegicus (Rat) protein is Regenerating islet-derived protein 3-beta.